Here is a 232-residue protein sequence, read N- to C-terminus: 2,3,4,5-tetrahydropyridine-2,6-dicarboxylate N-acetyltransferase (232 aa).

The protein belongs to the transferase hexapeptide repeat family. DapH subfamily.

It carries out the reaction (S)-2,3,4,5-tetrahydrodipicolinate + acetyl-CoA + H2O = L-2-acetamido-6-oxoheptanedioate + CoA. It functions in the pathway amino-acid biosynthesis; L-lysine biosynthesis via DAP pathway; LL-2,6-diaminopimelate from (S)-tetrahydrodipicolinate (acetylase route): step 1/3. Catalyzes the transfer of an acetyl group from acetyl-CoA to tetrahydrodipicolinate. The sequence is that of 2,3,4,5-tetrahydropyridine-2,6-dicarboxylate N-acetyltransferase from Streptococcus thermophilus (strain CNRZ 1066).